The primary structure comprises 330 residues: tRNA-modifying protein YgfZ (330 aa).

Folate-binding residues include tryptophan 28 and tryptophan 190.

This sequence belongs to the tRNA-modifying YgfZ family.

Its subcellular location is the cytoplasm. Its function is as follows. Folate-binding protein involved in regulating the level of ATP-DnaA and in the modification of some tRNAs. It is probably a key factor in regulatory networks that act via tRNA modification, such as initiation of chromosomal replication. The sequence is that of tRNA-modifying protein YgfZ from Yersinia enterocolitica serotype O:8 / biotype 1B (strain NCTC 13174 / 8081).